The sequence spans 293 residues: Probable adenylate kinase 1, chloroplastic (293 aa).

Residues 1 to 26 constitute a mitochondrion transit peptide; that stretch reads MAAVQRLLRASASGGAAAAAAAARRR. ATP is bound at residue 70–75; the sequence is GVGKGT. The interval 90–119 is NMP; that stretch reads ATGDLVRDELASSGPLSVQLAEIVNQGKLV. Residues Thr-91, Arg-96, 117–119, 147–150, and Gln-154 each bind AMP; these read KLV and GFPR. The tract at residues 183–231 is LID; the sequence is GRRICGQCGKNFNLACIDVKGENGLPPIYMAPLLPPNNCMSKLITRADD. Residues Arg-184 and 193 to 194 each bind ATP; that span reads NF. The AMP site is built by Arg-228 and Arg-239.

The protein belongs to the adenylate kinase family.

Its subcellular location is the mitochondrion. The enzyme catalyses AMP + ATP = 2 ADP. Its function is as follows. Catalyzes the reversible transfer of the terminal phosphate group between ATP and AMP. Plays an important role in cellular energy homeostasis and in adenine nucleotide metabolism. This is Probable adenylate kinase 1, chloroplastic from Oryza sativa subsp. japonica (Rice).